The primary structure comprises 382 residues: 8-amino-7-oxononanoate synthase (382 aa).

Substrate is bound by residues Arg21 and His131. Pyridoxal 5'-phosphate-binding residues include Ser178, His206, and Thr232. Lys235 bears the N6-(pyridoxal phosphate)lysine mark. Thr349 is a binding site for substrate.

The protein belongs to the class-II pyridoxal-phosphate-dependent aminotransferase family. BioF subfamily. As to quaternary structure, homodimer. The cofactor is pyridoxal 5'-phosphate.

It carries out the reaction 6-carboxyhexanoyl-[ACP] + L-alanine + H(+) = (8S)-8-amino-7-oxononanoate + holo-[ACP] + CO2. It participates in cofactor biosynthesis; biotin biosynthesis. Catalyzes the decarboxylative condensation of pimeloyl-[acyl-carrier protein] and L-alanine to produce 8-amino-7-oxononanoate (AON), [acyl-carrier protein], and carbon dioxide. This is 8-amino-7-oxononanoate synthase from Serratia marcescens.